A 386-amino-acid chain; its full sequence is 2,3,4,5-tetrahydropyridine-2,6-dicarboxylate N-succinyltransferase (386 aa).

The active-site Acyl-anhydride intermediate is E257. Succinyl-CoA-binding positions include R259, G274, S277, A300, 315–316 (DA), G323, K349, and 362–365 (RQDS).

This sequence belongs to the type 2 tetrahydrodipicolinate N-succinyltransferase family. As to quaternary structure, homotrimer.

Its subcellular location is the cytoplasm. It carries out the reaction (S)-2,3,4,5-tetrahydrodipicolinate + succinyl-CoA + H2O = (S)-2-succinylamino-6-oxoheptanedioate + CoA. The protein operates within amino-acid biosynthesis; L-lysine biosynthesis via DAP pathway; LL-2,6-diaminopimelate from (S)-tetrahydrodipicolinate (succinylase route): step 1/3. Functionally, catalyzes the conversion of the cyclic tetrahydrodipicolinate (THDP) into the acyclic N-succinyl-L-2-amino-6-oxopimelate using succinyl-CoA. The polypeptide is 2,3,4,5-tetrahydropyridine-2,6-dicarboxylate N-succinyltransferase (Campylobacter jejuni subsp. jejuni serotype O:2 (strain ATCC 700819 / NCTC 11168)).